The following is a 188-amino-acid chain: Elongation factor P (188 aa).

This sequence belongs to the elongation factor P family.

Its subcellular location is the cytoplasm. It functions in the pathway protein biosynthesis; polypeptide chain elongation. In terms of biological role, involved in peptide bond synthesis. Stimulates efficient translation and peptide-bond synthesis on native or reconstituted 70S ribosomes in vitro. Probably functions indirectly by altering the affinity of the ribosome for aminoacyl-tRNA, thus increasing their reactivity as acceptors for peptidyl transferase. The polypeptide is Elongation factor P (Flavobacterium johnsoniae (strain ATCC 17061 / DSM 2064 / JCM 8514 / BCRC 14874 / CCUG 350202 / NBRC 14942 / NCIMB 11054 / UW101) (Cytophaga johnsonae)).